A 98-amino-acid chain; its full sequence is Aspartyl/glutamyl-tRNA(Asn/Gln) amidotransferase subunit C (98 aa).

The disordered stretch occupies residues 77–98 (NEAPNPEGDFFRVPQILNTDEE).

The protein belongs to the GatC family. As to quaternary structure, heterotrimer of A, B and C subunits.

It catalyses the reaction L-glutamyl-tRNA(Gln) + L-glutamine + ATP + H2O = L-glutaminyl-tRNA(Gln) + L-glutamate + ADP + phosphate + H(+). The enzyme catalyses L-aspartyl-tRNA(Asn) + L-glutamine + ATP + H2O = L-asparaginyl-tRNA(Asn) + L-glutamate + ADP + phosphate + 2 H(+). Functionally, allows the formation of correctly charged Asn-tRNA(Asn) or Gln-tRNA(Gln) through the transamidation of misacylated Asp-tRNA(Asn) or Glu-tRNA(Gln) in organisms which lack either or both of asparaginyl-tRNA or glutaminyl-tRNA synthetases. The reaction takes place in the presence of glutamine and ATP through an activated phospho-Asp-tRNA(Asn) or phospho-Glu-tRNA(Gln). This is Aspartyl/glutamyl-tRNA(Asn/Gln) amidotransferase subunit C from Crocosphaera subtropica (strain ATCC 51142 / BH68) (Cyanothece sp. (strain ATCC 51142)).